Consider the following 103-residue polypeptide: UPF0235 protein Rleg2_3707 (103 aa).

Belongs to the UPF0235 family.

The chain is UPF0235 protein Rleg2_3707 from Rhizobium leguminosarum bv. trifolii (strain WSM2304).